The sequence spans 279 residues: DegV domain-containing protein CA_C0701 (279 aa).

A DegV domain is found at 4 to 277 (IKIVTDSTCD…TKACGVFFIE (274 aa)). The hexadecanoate site is built by Thr-62 and Ser-94.

Its function is as follows. May bind long-chain fatty acids, such as palmitate, and may play a role in lipid transport or fatty acid metabolism. In Clostridium acetobutylicum (strain ATCC 824 / DSM 792 / JCM 1419 / IAM 19013 / LMG 5710 / NBRC 13948 / NRRL B-527 / VKM B-1787 / 2291 / W), this protein is DegV domain-containing protein CA_C0701.